Consider the following 258-residue polypeptide: ATP synthase subunit a (258 aa).

A run of 6 helical transmembrane segments spans residues 30 to 50 (SSYF…VAMS), 85 to 105 (FFPF…LGMF), 122 to 142 (LIVT…YGVF), 151 to 171 (LFVP…IEII), 198 to 218 (FAGF…LAGI), and 230 to 250 (LEFL…CIYL).

This sequence belongs to the ATPase A chain family. As to quaternary structure, F-type ATPases have 2 components, CF(1) - the catalytic core - and CF(0) - the membrane proton channel. CF(1) has five subunits: alpha(3), beta(3), gamma(1), delta(1), epsilon(1). CF(0) has three main subunits: a(1), b(2) and c(9-12). The alpha and beta chains form an alternating ring which encloses part of the gamma chain. CF(1) is attached to CF(0) by a central stalk formed by the gamma and epsilon chains, while a peripheral stalk is formed by the delta and b chains.

It localises to the cell inner membrane. Key component of the proton channel; it plays a direct role in the translocation of protons across the membrane. This is ATP synthase subunit a from Maricaulis maris (strain MCS10) (Caulobacter maris).